A 178-amino-acid chain; its full sequence is Endothelin-2 (178 aa).

Positions 1–24 are cleaved as a signal peptide; that stretch reads MVSVPTTWCSVALALLVALHEGKG. Residues 25–46 constitute a propeptide that is removed on maturation; the sequence is QAAATLEQPASSSHAQGTHLRL. 2 disulfides stabilise this stretch: cysteine 49-cysteine 63 and cysteine 51-cysteine 59. Residues 70–178 constitute a propeptide that is removed on maturation; that stretch reads VNTPEQTAPY…RSTHSRWRKR (109 aa). The segment at 96 to 111 is endothelin-like; that stretch reads CQCSSARDPACATFCL. Residues 159–178 form a disordered region; it reads KRQQEAMREPRSTHSRWRKR. The span at 160-170 shows a compositional bias: basic and acidic residues; it reads RQQEAMREPRS.

The protein belongs to the endothelin/sarafotoxin family. In terms of tissue distribution, expressed in lung, but not in placental stem villi vessels or cultured placental villi smooth muscle cells.

Its subcellular location is the secreted. Endothelins are endothelium-derived vasoconstrictor peptides. This Homo sapiens (Human) protein is Endothelin-2 (EDN2).